The following is a 614-amino-acid chain: Serine/threonine-protein kinase-like protein E (614 aa).

Residues 15 to 404 (YLIQLHLGQN…NPNTNGAPLS (390 aa)) enclose the Protein kinase domain. 21–29 (LGQNSLGQQ) provides a ligand contact to ATP. Positions 256–269 (PEQTDNGVGKSSTG) are enriched in polar residues. The interval 256–284 (PEQTDNGVGKSSTGEPPFPTVHQSPESSS) is disordered.

The protein belongs to the protein kinase superfamily. Ser/Thr protein kinase family.

In terms of biological role, lacks protein kinase activity. The protein is Serine/threonine-protein kinase-like protein E (spkE) of Synechocystis sp. (strain ATCC 27184 / PCC 6803 / Kazusa).